A 488-amino-acid chain; its full sequence is Ribulose bisphosphate carboxylase large chain (488 aa).

2 residues coordinate substrate: Asn-127 and Thr-177. The Proton acceptor role is filled by Lys-179. Residue Lys-181 coordinates substrate. Mg(2+)-binding residues include Lys-205, Asp-207, and Glu-208. At Lys-205 the chain carries N6-carboxylysine. Catalysis depends on His-297, which acts as the Proton acceptor. Substrate-binding residues include Arg-298, His-330, and Ser-382.

The protein belongs to the RuBisCO large chain family. Type I subfamily. Heterohexadecamer of 8 large chains and 8 small chains. Mg(2+) serves as cofactor.

It is found in the plastid. The protein resides in the chloroplast. The enzyme catalyses 2 (2R)-3-phosphoglycerate + 2 H(+) = D-ribulose 1,5-bisphosphate + CO2 + H2O. The catalysed reaction is D-ribulose 1,5-bisphosphate + O2 = 2-phosphoglycolate + (2R)-3-phosphoglycerate + 2 H(+). RuBisCO catalyzes two reactions: the carboxylation of D-ribulose 1,5-bisphosphate, the primary event in carbon dioxide fixation, as well as the oxidative fragmentation of the pentose substrate in the photorespiration process. Both reactions occur simultaneously and in competition at the same active site. This Emiliania huxleyi (Coccolithophore) protein is Ribulose bisphosphate carboxylase large chain.